The following is a 409-amino-acid chain: Translation initiation factor 2 subunit gamma (409 aa).

A tr-type G domain is found at 7 to 203 (QPEVNIGLVG…AIEREIPTPE (197 aa)). The G1 stretch occupies residues 16–23 (GHVDHGKT). Positions 19, 23, 44, and 46 each coordinate Mg(2+). 19 to 24 (DHGKTT) serves as a coordination point for GTP. Residues 44 to 48 (GISIR) form a G2 region. The interval 90–93 (DAPG) is G3. GTP contacts are provided by residues 146–149 (NKID) and 181–183 (SAQ). A G4 region spans residues 146–149 (NKID). Residues 181–183 (SAQ) form a G5 region.

This sequence belongs to the TRAFAC class translation factor GTPase superfamily. Classic translation factor GTPase family. EIF2G subfamily. Heterotrimer composed of an alpha, a beta and a gamma chain. The cofactor is Mg(2+).

The catalysed reaction is GTP + H2O = GDP + phosphate + H(+). EIF-2 functions in the early steps of protein synthesis by forming a ternary complex with GTP and initiator tRNA. In Haloquadratum walsbyi (strain DSM 16790 / HBSQ001), this protein is Translation initiation factor 2 subunit gamma.